Here is a 612-residue protein sequence, read N- to C-terminus: Apoptosis-inducing factor 1, mitochondrial (612 aa).

Short sequence motifs (mitochondrial localization signal) lie at residues 1–30 (MFRC…PKQR) and 62–88 (KMDN…KTIK). A mitochondrion-targeting transit peptide spans 1–54 (MFRCGGLAGAFKQKLVPLVRTVYVQRPKQRNRLPGNLFQQWRVPLELQMARQMA). A propeptide spans 55-101 (SSGSSGGKMDNSVLVLIVGLSTIGAGAYAYKTIKEDQKRYNERVMGL) (removed in mature form). At Lys-108 the chain carries N6-succinyllysine. Ser-115 carries the phosphoserine modification. Residues 133-482 (FLLIGGGTAA…KPYWHQSMFW (350 aa)) are FAD-dependent oxidoreductase. FAD-binding positions include 137–141 (GGGTA), 163–164 (ED), Arg-171, and Lys-176. NAD(+) is bound at residue Trp-195. FAD is bound at residue Val-232. Lys-254 participates in a covalent cross-link: Glycyl lysine isopeptide (Lys-Gly) (interchain with G-Cter in ubiquitin). Ser-267 bears the Phosphoserine mark. Arg-284 contributes to the FAD binding site. NAD(+) is bound by residues 307-310 (GGFL), Glu-335, and Lys-341. At Ser-370 the chain carries Phosphoserine. An N6-acetyllysine modification is found at Lys-387. Position 398 (Gly-398) interacts with NAD(+). An FAD-binding site is contributed by Asp-437. A Nuclear localization signal motif is present at residues 445–450 (KLGRRR). NAD(+) is bound by residues 452–453 (EH), Trp-482, and Glu-492. Residues 453 to 454 (HH) and Trp-482 contribute to the FAD site. Positions 512–528 (AQDNPKSATEQSGTGIR) are enriched in polar residues. The segment at 512-551 (AQDNPKSATEQSGTGIRSESETESEASEITIPPSAPAVPQ) is disordered. Thr-520 is subject to Phosphothreonine. Residues Ser-523 and Ser-529 each carry the phosphoserine modification. Asn-582 is an NAD(+) binding site. At Lys-592 the chain carries N6-acetyllysine.

The protein belongs to the FAD-dependent oxidoreductase family. In terms of assembly, monomer (oxidized form). Homodimer (reduced form). Upon reduction with NADH, undergoes dimerization and forms tight, long-lived FADH2-NAD charge transfer complexes (CTC) resistant to oxidation. Also dimerizes with isoform 3 preventing its release from mitochondria. Interacts with XIAP/BIRC4. Interacts (via N-terminus) with EIF3G (via C-terminus). Interacts with PRELID1. Interacts with CHCHD4; the interaction increases in presence of NADH. Interacts with processed form of PARP1 (Poly [ADP-ribose] polymerase 1, processed C-terminus); interaction is mediated with poly-ADP-ribose chains attached to PARP1, promoting translocation into the nucleus. The cofactor is FAD. Under normal conditions, a 54-residue N-terminal segment is first proteolytically removed during or just after translocation into the mitochondrial intermembrane space (IMS) by the mitochondrial processing peptidase (MPP) to form the inner-membrane-anchored mature form (AIFmit). During apoptosis, it is further proteolytically processed at amino-acid position 101 leading to the generation of the mature form, which is confined to the mitochondrial IMS in a soluble form (AIFsol). AIFsol is released to the cytoplasm in response to specific death signals, and translocated to the nucleus, where it induces nuclear apoptosis in a caspase-independent manner. Post-translationally, ubiquitination by XIAP/BIRC4 does not lead to proteasomal degradation. Ubiquitination at Lys-254 by XIAP/BIRC4 blocks its ability to bind DNA and induce chromatin degradation, thereby inhibiting its ability to induce cell death. In terms of tissue distribution, expressed in cortical neurons (at protein level). Expressed in liver (at protein level).

It is found in the mitochondrion intermembrane space. Its subcellular location is the mitochondrion inner membrane. The protein localises to the cytoplasm. The protein resides in the nucleus. It localises to the perinuclear region. It is found in the mitochondrion. Its subcellular location is the cytosol. The enzyme catalyses A + NADH + H(+) = AH2 + NAD(+). Functions both as NADH oxidoreductase and as regulator of apoptosis. In response to apoptotic stimuli, it is released from the mitochondrion intermembrane space into the cytosol and to the nucleus, where it functions as a proapoptotic factor in a caspase-independent pathway. Release into the cytoplasm is mediated upon binding to poly-ADP-ribose chains. The soluble form (AIFsol) found in the nucleus induces 'parthanatos' i.e. caspase-independent fragmentation of chromosomal DNA. Binds to DNA in a sequence-independent manner. Interacts with EIF3G, and thereby inhibits the EIF3 machinery and protein synthesis, and activates caspase-7 to amplify apoptosis. Plays a critical role in caspase-independent, pyknotic cell death in hydrogen peroxide-exposed cells. In contrast, participates in normal mitochondrial metabolism. Plays an important role in the regulation of respiratory chain biogenesis by interacting with CHCHD4 and controlling CHCHD4 mitochondrial import. The chain is Apoptosis-inducing factor 1, mitochondrial from Mus musculus (Mouse).